The primary structure comprises 219 residues: Transcriptional regulatory protein QseB (219 aa).

The Response regulatory domain occupies Arg2–Val116. Residue Asp51 is modified to 4-aspartylphosphate. The segment at residues Ser124–Asp218 is a DNA-binding region (ompR/PhoB-type).

Post-translationally, phosphorylated by QseC.

The protein localises to the cytoplasm. In terms of biological role, member of a two-component regulatory system QseB/QseC. Activates the flagella regulon by activating transcription of flhDC. The chain is Transcriptional regulatory protein QseB (qseB) from Salmonella typhimurium (strain LT2 / SGSC1412 / ATCC 700720).